The sequence spans 699 residues: Dymeclin (699 aa).

Gly2 carries N-myristoyl glycine lipidation. Position 346 is a phosphoserine (Ser346).

This sequence belongs to the dymeclin family.

The chain is Dymeclin from Drosophila melanogaster (Fruit fly).